A 194-amino-acid chain; its full sequence is MDEDGLPLMGSGIDLTKVPAIQQKRTVAFLNQFVVHTVQFLNRFSTVCEEKLADLSLRIQQIETTLNILDAKLSSIPGLDDVTVEVSPLNVTSVTNGAHPEATSEQPQQNSTQDSGLQESEVSAENILTVAKDPRYARYLKMVQVGVPVMAIRNKMISEGLDPDLLERPDAPVPDGESEKTVEESSDSESSFSD.

At methionine 1 the chain carries N-acetylmethionine. A coiled-coil region spans residues 46-74 (TVCEEKLADLSLRIQQIETTLNILDAKLS). 2 disordered regions span residues 93-121 (SVTN…QESE) and 159-194 (EGLD…SFSD). Positions 103 to 121 (TSEQPQQNSTQDSGLQESE) are enriched in polar residues.

It belongs to the CCDC53 family. In terms of assembly, component of the WASH core complex also described as WASH regulatory complex (SHRC) composed of WASH (WASHC1, WASH2P or WASH3P), WASHC2 (WASHC2A or WASHC2C), WASHC3, WASHC4 and WASHC5. The WASH core complex associates via WASHC2 with the F-actin-capping protein dimer (formed by CAPZA1, CAPZA2 or CAPZA3 and CAPZB) in a transient or substoichiometric manner which was initially described as WASH complex.

Its subcellular location is the early endosome. Functionally, acts as a component of the WASH core complex that functions as a nucleation-promoting factor (NPF) at the surface of endosomes, where it recruits and activates the Arp2/3 complex to induce actin polymerization, playing a key role in the fission of tubules that serve as transport intermediates during endosome sorting. The protein is WASH complex subunit 3 of Homo sapiens (Human).